Reading from the N-terminus, the 66-residue chain is U1-theraphotoxin-Cg1d 1 (66 aa).

Residues 1–21 form the signal peptide; that stretch reads MKMSALFVIFGLALLFCNSFA. The propeptide occupies 22 to 29; sequence AELKATGR. 3 cysteine pairs are disulfide-bonded: C31-C46, C38-C51, and C45-C58. The residue at position 63 (P63) is a Proline amide.

Belongs to the neurotoxin 10 (Hwtx-1) family. 46 (Jztx-7/10/12) subfamily. Expressed by the venom gland.

It is found in the secreted. In terms of biological role, probable ion channel inhibitor. This chain is U1-theraphotoxin-Cg1d 1, found in Chilobrachys guangxiensis (Chinese earth tiger tarantula).